Reading from the N-terminus, the 672-residue chain is COBRA-like protein 10 (672 aa).

A signal peptide spans 1–35; the sequence is MRAIDVKTGMKIPWDVRYSLSLFIFLSSILFLSNG. Asn-79, Asn-135, Asn-264, Asn-328, Asn-339, Asn-368, Asn-422, Asn-442, Asn-483, Asn-562, Asn-570, and Asn-589 each carry an N-linked (GlcNAc...) asparagine glycan. Positions 502 to 607 constitute a CBM2 domain; it reads KLPCPDNCGV…PVPGKQQSVI (106 aa). A lipid anchor (GPI-anchor amidated serine) is attached at Ser-646. Residues 647–672 constitute a propeptide, removed in mature form; sequence SGHRRGISVSMSFVFATIAAFALMMD. The Required for processing by the PIG complex, a critical step for apical plasma membrane localization in pollen tubes signature appears at 664–672; it reads IAAFALMMD.

It belongs to the COBRA family. The GPI-anchor attachment at Ser-646 requires APTG1. Expressed in roots, stems, leaves, flowers and siliques. Specific expression in the pollen tube.

The protein localises to the cell membrane. It is found in the cytoplasm. The protein resides in the vesicle. Functionally, involved in the deposition of apical pectin cap and cellulose microfibrils in pollen tubes. Not essential for pollen development, hydration or germination, but required for pollen tubes growth in the female transmitting tract of pistil and toward micropyles, via the perception of ovule guidance cues. The chain is COBRA-like protein 10 from Arabidopsis thaliana (Mouse-ear cress).